A 342-amino-acid chain; its full sequence is Pyrophosphate--fructose 6-phosphate 1-phosphotransferase (342 aa).

Glycine 10 is a binding site for diphosphate. Mg(2+) is bound at residue glutamate 103. Substrate contacts are provided by residues 126–128, arginine 163, 170–172, glutamate 222, arginine 266, and 272–275; these read TID, MGR, and HVQR. Catalysis depends on aspartate 128, which acts as the Proton acceptor.

It belongs to the phosphofructokinase type A (PFKA) family. Mixed-substrate PFK group III subfamily. In terms of assembly, homodimer or homotetramer. Requires Mg(2+) as cofactor.

It localises to the cytoplasm. The enzyme catalyses beta-D-fructose 6-phosphate + diphosphate = beta-D-fructose 1,6-bisphosphate + phosphate + H(+). It functions in the pathway carbohydrate degradation; glycolysis; D-glyceraldehyde 3-phosphate and glycerone phosphate from D-glucose: step 3/4. Non-allosteric. In terms of biological role, catalyzes the phosphorylation of D-fructose 6-phosphate, the first committing step of glycolysis. Uses inorganic phosphate (PPi) as phosphoryl donor instead of ATP like common ATP-dependent phosphofructokinases (ATP-PFKs), which renders the reaction reversible, and can thus function both in glycolysis and gluconeogenesis. Consistently, PPi-PFK can replace the enzymes of both the forward (ATP-PFK) and reverse (fructose-bisphosphatase (FBPase)) reactions. This is Pyrophosphate--fructose 6-phosphate 1-phosphotransferase from Streptomyces coelicolor (strain ATCC BAA-471 / A3(2) / M145).